The primary structure comprises 144 residues: Superoxide dismutase [Mn] 1 (144 aa).

Residues histidine 42, aspartate 124, and histidine 128 each contribute to the Mn(2+) site.

The protein belongs to the iron/manganese superoxide dismutase family. It depends on Mn(2+) as a cofactor.

The catalysed reaction is 2 superoxide + 2 H(+) = H2O2 + O2. Its function is as follows. Destroys superoxide anion radicals which are normally produced within the cells and which are toxic to biological systems. The sequence is that of Superoxide dismutase [Mn] 1 (sod1) from Haloferax mediterranei (Halobacterium mediterranei).